A 667-amino-acid chain; its full sequence is Mediator of RNA polymerase II transcription subunit 17 (667 aa).

A coiled-coil region spans residues Lys-172–Leu-197.

The protein belongs to the Mediator complex subunit 17 family. Component of the Mediator complex.

The protein resides in the nucleus. In terms of biological role, component of the Mediator complex, a coactivator involved in regulated gene transcription of nearly all RNA polymerase II-dependent genes. Mediator functions as a bridge to convey information from gene-specific regulatory proteins to the basal RNA polymerase II transcription machinery. Mediator is recruited to promoters by direct interactions with regulatory proteins and serves as a scaffold for the assembly of a functional preinitiation complex with RNA polymerase II and the general transcription factors. This chain is Mediator of RNA polymerase II transcription subunit 17 (mdt-17), found in Caenorhabditis elegans.